Reading from the N-terminus, the 761-residue chain is Probable ubiquitin carboxyl-terminal hydrolase creB (761 aa).

The disordered stretch occupies residues 1–45 (MGSFLRSFRHNGGSTAPSVGAVPAKKEPQPPPMTPLEKRLLDMGP). The span at 36–45 (LEKRLLDMGP) shows a compositional bias: basic and acidic residues. The region spanning 55–468 (YGMENYGNTC…CAYVLFYQET (414 aa)) is the USP domain. C64 functions as the Nucleophile in the catalytic mechanism. Disordered regions lie at residues 113–146 (EAEA…DSPE) and 242–269 (PLME…KTPN). Over residues 256–269 (SVDQSSSTGSKTPN) the composition is skewed to polar residues. H419 functions as the Proton acceptor in the catalytic mechanism. The interval 496–761 (LKQNGFPQSP…LRKKSFSILS (266 aa)) is disordered. Pro residues predominate over residues 555-566 (PLSPVPPVPPIP). Positions 577–640 (KNDALAKREE…ASKAEEDRRL (64 aa)) form a coiled coil. Basic and acidic residues predominate over residues 580–649 (ALAKREEKER…LSTENGKEKQ (70 aa)). Residues 655-666 (RLKRGSKSLSHR) show a composition bias toward basic residues. Residues 692-710 (SQSGPTSEQQQQQRQQSPP) show a composition bias toward low complexity. Residues 712 to 722 (HDQPPNSPQPG) show a composition bias toward pro residues. A compositionally biased stretch (basic and acidic residues) spans 725-743 (TIREDEQVNHKDSKHERTG). Basic residues predominate over residues 744-761 (HGKWRSFSLRKKSFSILS).

This sequence belongs to the peptidase C19 family. In terms of assembly, interacts with creA, creC and qutD.

The catalysed reaction is Thiol-dependent hydrolysis of ester, thioester, amide, peptide and isopeptide bonds formed by the C-terminal Gly of ubiquitin (a 76-residue protein attached to proteins as an intracellular targeting signal).. In terms of biological role, ubiquitin thioesterase component of the regulatory network controlling carbon source utilization through ubiquitination and deubiquitination involving creA, creB, creC, creD and acrB. Deubiquitinates the creA catabolic repressor and the quinate permease qutD. Also plays a role in response to carbon starvation and the control of extracellular proteases activity. The protein is Probable ubiquitin carboxyl-terminal hydrolase creB (creB) of Neosartorya fischeri (strain ATCC 1020 / DSM 3700 / CBS 544.65 / FGSC A1164 / JCM 1740 / NRRL 181 / WB 181) (Aspergillus fischerianus).